The sequence spans 612 residues: MESLIVLINTIQRACTVVGDHGGDSNALSSLWEALPSVAVVGGQSSGKSSVLESIVGRDFLPRGSGIVTRRPLVLQLHKTENGTEDNAEFLHLTNKKFTNFSLVRKEIEDETDRITGKNKQISSIPIHLSIFSPNVVNLTLIDLPGLTKVAVEGQPETIVEDIESMVRSYVEKPNCLILAISPANQDIATSDAMKLAKEVDPIGDRTFGVLTKLDLMDKGTNALDVINGRSYKLKYPWVGIVNRSQADINKNVDMMVARRKEREYFETSPDYGHLATRMGSEYLAKLLSKLLESVIRSRIPSILSLINNNIEELERELDQLGRPIAIDAGAQLYTILGMCRAFEKIFKEHLDGGRPGGARIYGIFDYNLPTAIKKLPFDRHLSLQSVKRIVSESDGYQPHLIAPELGYRRLIEGSLNHFRGPAEASVNAIHLILKELVRKAIAETEELKRFPSLQIELVAAANSSLDKFREESMKSVLRLVDMESSYLTVDFFRKLHVESQNMSLSSPTSAIDQYGDGHFRKIASNVAAYIKMVAETLVNTIPKAVVHCQVRQAKLSLLNYFYAQISQSQGKRLGQLLDENPALMERRMQCAKRLELYKKARDEIDAAVWVR.

Met-1 bears the N-acetylmethionine mark. The Dynamin-type G domain maps to 32–301 (WEALPSVAVV…LESVIRSRIP (270 aa)). Residues 42-49 (GGQSSGKS) are G1 motif. A GTP-binding site is contributed by 45–50 (SSGKSS). The G2 motif stretch occupies residues 68–70 (VTR). A G3 motif region spans residues 143-146 (DLPG). Positions 212-215 (TKLD) are G4 motif. GTP-binding positions include 213–218 (KLDLMD) and 243–246 (NRSQ). Residues 242–245 (VNRS) form a G5 motif region. Residues 520 to 612 (FRKIASNVAA…DEIDAAVWVR (93 aa)) form the GED domain.

The protein belongs to the TRAFAC class dynamin-like GTPase superfamily. Dynamin/Fzo/YdjA family. As to quaternary structure, forms homodimer and may homooligomerize and heterooligomerize to form the phragmoplastin complex. Binds to PHIP1.

Its subcellular location is the cytoplasm. The protein resides in the cytoskeleton. The catalysed reaction is GTP + H2O = GDP + phosphate + H(+). In terms of biological role, putative microtubule-associated force-producing protein. Has a GTPase activity. The chain is Phragmoplastin DRP1D from Arabidopsis thaliana (Mouse-ear cress).